Reading from the N-terminus, the 1139-residue chain is Protein kinase C-like (1139 aa).

Residues 1–67 (MNEDEAIQNI…LRDIQLRKVG (67 aa)) enclose the REM-1 1 domain. Residues 72–132 (GMSLGADDAG…PGPGAASKAR (61 aa)) form a disordered region. The REM-1 2 domain occupies 142–219 (KYDTPYLGPR…LKRYEELHVD (78 aa)). A C2 domain is found at 225-343 (AQDDDSINTP…MRRKRIEAEM (119 aa)). Residues 349-404 (VSADRMGSTGAPSQFPMSPTSGSFGGSPQAPGGGQGQAPGPFGDPAPQPQVVTGPI) form a disordered region. Over residues 358 to 368 (GAPSQFPMSPT) the composition is skewed to polar residues. 2 Phorbol-ester/DAG-type zinc fingers span residues 454–502 (GHKF…VTKC) and 522–572 (PHRF…PDFC). Disordered stretches follow at residues 590-637 (KQRQ…TPSA), 649-668 (QTSP…LSAA), and 679-804 (QGRT…TDPG). The span at 594-614 (QKTTSLSEKTLRSGATKSPTT) shows a compositional bias: polar residues. Residues 615-629 (AGHGSSASFSSAGAG) are compositionally biased toward low complexity. 2 stretches are compositionally biased toward pro residues: residues 723 to 734 (AQPPAQQRPPQP) and 743 to 760 (AQMP…PPQP). Over residues 761-793 (GQQYQQQQPAAQKPQPQPPATAQGAAAGPPGSQ) the composition is skewed to low complexity. Positions 814 to 1073 (FNFLAVLGKG…AQEVMSQPFF (260 aa)) constitute a Protein kinase domain. ATP contacts are provided by residues 820-828 (LGKGNFGKV) and Lys-843. Asp-939 (proton acceptor) is an active-site residue. One can recognise an AGC-kinase C-terminal domain in the interval 1074–1139 (RNINWDDIYH…RGFSYTADLD (66 aa)).

This sequence belongs to the protein kinase superfamily. AGC Ser/Thr protein kinase family. PKC subfamily.

It carries out the reaction L-seryl-[protein] + ATP = O-phospho-L-seryl-[protein] + ADP + H(+). It catalyses the reaction L-threonyl-[protein] + ATP = O-phospho-L-threonyl-[protein] + ADP + H(+). With respect to regulation, stimulated about twofold by phospholipids or phorbol esters. The sequence is that of Protein kinase C-like (pkc1) from Hypocrea jecorina (Trichoderma reesei).